The primary structure comprises 344 residues: Dihydroorotase (344 aa).

Zn(2+) contacts are provided by histidine 13 and histidine 15. Substrate-binding positions include 15–17 and asparagine 41; that span reads HLR. The Zn(2+) site is built by lysine 99, histidine 136, and histidine 174. An N6-carboxylysine modification is found at lysine 99. A substrate-binding site is contributed by histidine 136. Leucine 219 lines the substrate pocket. Aspartate 247 is a Zn(2+) binding site. Aspartate 247 is a catalytic residue. Substrate-binding residues include histidine 251 and alanine 263.

Belongs to the metallo-dependent hydrolases superfamily. DHOase family. Class II DHOase subfamily. In terms of assembly, homodimer. It depends on Zn(2+) as a cofactor.

The catalysed reaction is (S)-dihydroorotate + H2O = N-carbamoyl-L-aspartate + H(+). It functions in the pathway pyrimidine metabolism; UMP biosynthesis via de novo pathway; (S)-dihydroorotate from bicarbonate: step 3/3. In terms of biological role, catalyzes the reversible cyclization of carbamoyl aspartate to dihydroorotate. This is Dihydroorotase from Microcystis aeruginosa (strain NIES-843 / IAM M-2473).